The following is a 475-amino-acid chain: Probable L-cysteine desulfhydrase, chloroplastic (475 aa).

Residues 1 to 24 (MASSLSPPEEASYHHRHTKRYTSS) constitute a chloroplast transit peptide. Residues 1–40 (MASSLSPPEEASYHHRHTKRYTSSASSASSTTNGTVESSV) form a disordered region. Over residues 22 to 32 (TSSASSASSTT) the composition is skewed to low complexity. Lysine 284 is modified (N6-(pyridoxal phosphate)lysine).

This sequence belongs to the class-V pyridoxal-phosphate-dependent aminotransferase family. In terms of assembly, interacts in vitro with QS.

The protein localises to the plastid. It localises to the chloroplast. In terms of biological role, may catalyze the production of hydrogen sulfide (H2S) from cysteine. In Arabidopsis thaliana (Mouse-ear cress), this protein is Probable L-cysteine desulfhydrase, chloroplastic.